A 408-amino-acid polypeptide reads, in one-letter code: Imidazolonepropionase (408 aa).

The Fe(3+) site is built by H73 and H75. Zn(2+) contacts are provided by H73 and H75. Positions 82, 145, and 178 each coordinate 4-imidazolone-5-propanoate. Y145 contacts N-formimidoyl-L-glutamate. H243 is a Fe(3+) binding site. H243 is a binding site for Zn(2+). Position 246 (Q246) interacts with 4-imidazolone-5-propanoate. Residue D318 coordinates Fe(3+). D318 provides a ligand contact to Zn(2+). Positions 320 and 322 each coordinate N-formimidoyl-L-glutamate. S323 serves as a coordination point for 4-imidazolone-5-propanoate.

This sequence belongs to the metallo-dependent hydrolases superfamily. HutI family. Requires Zn(2+) as cofactor. Fe(3+) serves as cofactor.

It is found in the cytoplasm. It catalyses the reaction 4-imidazolone-5-propanoate + H2O = N-formimidoyl-L-glutamate. The protein operates within amino-acid degradation; L-histidine degradation into L-glutamate; N-formimidoyl-L-glutamate from L-histidine: step 3/3. Functionally, catalyzes the hydrolytic cleavage of the carbon-nitrogen bond in imidazolone-5-propanoate to yield N-formimidoyl-L-glutamate. It is the third step in the universal histidine degradation pathway. The protein is Imidazolonepropionase of Shewanella woodyi (strain ATCC 51908 / MS32).